The sequence spans 461 residues: tRNA modification GTPase MnmE (461 aa).

Residues R21, E87, and K126 each coordinate (6S)-5-formyl-5,6,7,8-tetrahydrofolate. The TrmE-type G domain occupies 222–384; the sequence is QSTVVLYGEP…LLELLKSKLT (163 aa). N232 contacts K(+). Residues 232-237, 251-257, and 276-279 each bind GTP; these read NTGKSS, SDVPGTT, and DTAG. S236 lines the Mg(2+) pocket. Residues S251, V253, and T256 each coordinate K(+). Residue T257 coordinates Mg(2+). K461 provides a ligand contact to (6S)-5-formyl-5,6,7,8-tetrahydrofolate.

It belongs to the TRAFAC class TrmE-Era-EngA-EngB-Septin-like GTPase superfamily. TrmE GTPase family. In terms of assembly, homodimer. Heterotetramer of two MnmE and two MnmG subunits. It depends on K(+) as a cofactor.

It localises to the cytoplasm. Functionally, exhibits a very high intrinsic GTPase hydrolysis rate. Involved in the addition of a carboxymethylaminomethyl (cmnm) group at the wobble position (U34) of certain tRNAs, forming tRNA-cmnm(5)s(2)U34. The chain is tRNA modification GTPase MnmE from Leptospira biflexa serovar Patoc (strain Patoc 1 / Ames).